Reading from the N-terminus, the 866-residue chain is Scm-like with four MBT domains protein 1 (866 aa).

4 MBT repeats span residues 20–120, 128–232, 242–348, and 356–453; these read LSWE…LEAP, SDWD…LQPP, AEWQ…ISPP, and FDWA…LSTP. Residues 34–42 form an antigenic epitope region; the sequence is VPYGSFKHV. The segment at 641–777 is disordered; it reads KKKNKRIGRP…DDENKPPSPK (137 aa). The segment covering 663-682 has biased composition (basic residues); it reads KASKRRKRRKNVFVHKKKRS. The span at 683–694 shows a compositional bias: polar residues; that stretch reads SASVDNTPAGSP. Composition is skewed to acidic residues over residues 699–713 and 721–730; these read GEDEDDPDEGDDDSL and QQDELQEESE. A compositionally biased stretch (low complexity) spans 737-749; sequence CSSSPTQSEISTS. Residues Ser-767 and Ser-775 each carry the phosphoserine modification. The SAM domain maps to 796–864; that stretch reads WSVADVVRFI…RIKFAFYEQF (69 aa).

Interacts with MYOD1. Component of the SLC (SFMBT1-LSD1-CoREST) corepressor complex, which also contains KDM1A/LSD1 and RCOR1/CoREST. Interacts with KDM1A/LSD1 and RCOR1/CoREST. Interacts with L3MBTL3. Expressed in all cell lines and normal tissues tested, including the thymus.

It is found in the nucleus. In terms of biological role, histone-binding protein, which is part of various corepressor complexes. Mediates the recruitment of corepressor complexes to target genes, followed by chromatin compaction and repression of transcription. Plays a role during myogenesis: required for the maintenance of undifferentiated states of myogenic progenitor cells via interaction with MYOD1. Interaction with MYOD1 leads to the recruitment of associated corepressors and silencing of MYOD1 target genes. Part of the SLC complex in germ cells, where it may play a role during spermatogenesis. The chain is Scm-like with four MBT domains protein 1 (SFMBT1) from Homo sapiens (Human).